A 130-amino-acid polypeptide reads, in one-letter code: Glycine cleavage system H protein (130 aa).

Residues 22–103 (KAYIGISDCA…PYGSWIAAIE (82 aa)) form the Lipoyl-binding domain. N6-lipoyllysine is present on lysine 63.

The protein belongs to the GcvH family. As to quaternary structure, the glycine cleavage system is composed of four proteins: P, T, L and H. It depends on (R)-lipoate as a cofactor.

The glycine cleavage system catalyzes the degradation of glycine. The H protein shuttles the methylamine group of glycine from the P protein to the T protein. This chain is Glycine cleavage system H protein, found in Clostridium botulinum (strain ATCC 19397 / Type A).